Reading from the N-terminus, the 576-residue chain is MYRAAASLASKARQAGSSSAARQVGSRLAWSRNYAAKDIKFGVEARALMLRGVEELADAVKVTMGPKGRNVVIEQSFGAPKVTKDGVTVAKSIEFKDRVKNVGASLVKQVANATNDTAGDGTTCATVLTKAIFTEGCKSVAAGMNAMDLRRGISMAVDAVVTNLKGMARMISTSEEIAQVGTISANGEREIGELIAKAMEKVGKEGVITIADGNTLYNELEVVEGMKLDRGYISPYFITNSKAQKCELEDPLILIHDKKVTNMHAVVKVLEMALKKQRPLLIVAEDVESEALGTLIINKLRAGIKVCAVKAPGFGENRKANLQDLAILTGGEVITEELGMNLENVEPHMLGSCKKVTVSKDDTVILDGAGDKKSIEERADQIRSAVENSTSDYDKEKLQERLAKLSGGVAVLKIGGASEAEVGEKKDRVTDALNATKAAVEEGIVPGGGVALLYASKELDKLQTANFDQKIGVQIIQNALKTPVHTIASNAGVEGAVVVGKLLEQGNTDLGYDAAKDEYVDMVKAGIIDPLKVIRTALVDAASVSSLMTTTESIIVEIPKEEAPAPAMGGMGGMDY.

Residues 1-34 (MYRAAASLASKARQAGSSSAARQVGSRLAWSRNY) constitute a mitochondrion transit peptide.

The protein belongs to the chaperonin (HSP60) family.

The protein localises to the mitochondrion. In terms of biological role, implicated in mitochondrial protein import and macromolecular assembly. May facilitate the correct folding of imported proteins. May also prevent misfolding and promote the refolding and proper assembly of unfolded polypeptides generated under stress conditions in the mitochondrial matrix. The sequence is that of Chaperonin CPN60-2, mitochondrial (CPN60II) from Zea mays (Maize).